A 216-amino-acid chain; its full sequence is Adenylate kinase (216 aa).

Position 10–15 (Gly-10–Thr-15) interacts with ATP. The interval Ser-30–Val-59 is NMP. AMP contacts are provided by residues Thr-31, Arg-36, Ala-57–Val-59, Gly-85–Arg-88, and Gln-92. Residues Gly-126–Asp-163 are LID. ATP is bound at residue Arg-127. Residues Cys-130 and Cys-133 each contribute to the Zn(2+) site. ATP is bound at residue Thr-136–Tyr-137. Residues Cys-150 and Cys-153 each coordinate Zn(2+). Positions 160 and 171 each coordinate AMP. Gln-199 is a binding site for ATP.

The protein belongs to the adenylate kinase family. Monomer.

It is found in the cytoplasm. It carries out the reaction AMP + ATP = 2 ADP. It functions in the pathway purine metabolism; AMP biosynthesis via salvage pathway; AMP from ADP: step 1/1. In terms of biological role, catalyzes the reversible transfer of the terminal phosphate group between ATP and AMP. Plays an important role in cellular energy homeostasis and in adenine nucleotide metabolism. This is Adenylate kinase from Bacillus anthracis (strain A0248).